The following is a 1351-amino-acid chain: MNVYDKVLQFGSKKARARGMALNKLSRNRLEDIYAGSGPLVFGFGPIDMVDPGSLNPSIKTLDTVYVAAVQPDNQYVVHHFVPGRNEWVETDASTHQPTALVGVLVQDHKAKTREVEDLKSQLSQLRMEHEILRHEYERLKLKSPIVKPFKPLKVLLFSLLLGLLFAGVTNGARTGTCYAYDEEKDTCLYWEWKDSREVAWYDSYVTEALAIYNRACVYVRSKEFMTYLSLVFQTVFNWYFCATALAVYYMARAENPIVMFVTLALATLSQFQLLAVAVLPLLDFSATMGLWLSMVVFYMSQQISILVSFCVLVLSVMIGTFMADSEYAMMIKGHAVVFAIVCYSHVAMILNIPPWVVSLTMVCYRLWRVCFVFPAERLEIRSADGKVLHTVPTHPNWTAKVTRFVQSLRKGLRTSVAPTARIVPDGIAIVEAREGVGTCFRVKNNLVTSKHVVGSDDAVKIRWGAQEDMARVTYRHPTKDIALMALPTNLQTMPAYKFAKAITDGPIVMTAFDEANLLLVAVTEGVRVEDHMTYSVATRNGMSGAPITTVDGRVIAVHQTNTGFTGGAVIFVPEDIPEVRKISKREQELEDRVKQLEGMLNMDQAYVDSNLIVDLVREAVQREMKVLRTELANLGGFSQKKKGKNKSTKRKRKAVWTEEEYKAMLEKGFTRDQLRIMADAIRDQYYDDEDEQSEEEAGYPDWSDPGDSTDIENEWFGYEQSWKELEPAKSGVVVNTLPKDLVFKYSLDNYPISKQDIQAVAKELKIYEKAISDIISTSVSTDGKWKDDVDAQKILQELDGLWWGINHTLWEHGLMPFTQRRKRVQQPKKLQRGPEDPGPEECKLDYWEQLVEPSKEKFLVPPEYPLLGVVPLDRPISDFDAPVDNLLALLPEPESPDLGFEPAVWGPEAYVKSFEKFDFADPDPNIEKNYPREWAFANLVLHREFDFLADSVVKDITATSKNSESTPGFPKTYWWKTEAEYLAKRGYADYVSEWNRIRGGARPNVLWYLFLKKEILKSTKVRDADIRQIICSDPIFARIGCCFEEDQNERMKRRTKTRMPQCGWSPFFGGFNDRIQRLVAKGNPYWIEFDWTRYDGTIPSQIFKHIKNFRFSMLAKEYQTPELRNMYHWYVDNILRRYVCMPSGEITIQHKGNPSGQVSTTMDNNLVNVFLQAFEYAYLHPEKSMDELRKDWESYDSLIYGDDRLTTSPSVPNDYVTRVVAMYKDIFGMWVKPEKVKVSHSPVGLSFCGFVITHQDGQYLPVPAEEAKLLASLLRPTKKLENMDALYGKLLCYRILNHNLPNDNKFRNYILVALEVMARHYSSRGEEPPFYVTESMLDKLWRGGPKFDYG.

A coiled-coil region spans residues 105–144; that stretch reads LVQDHKAKTREVEDLKSQLSQLRMEHEILRHEYERLKLKS. 5 helical membrane passes run 153 to 173, 231 to 251, 257 to 277, 304 to 324, and 337 to 357; these read LKVLLFSLLLGLLFAGVTNGA, LVFQTVFNWYFCATALAVYYM, PIVMFVTLALATLSQFQLLAV, ISILVSFCVLVLSVMIGTFMA, and VVFAIVCYSHVAMILNIPPWV. Active-site charge relay system; for serine protease activity residues include histidine 452, aspartate 481, and serine 544. Residues 579–635 adopt a coiled-coil conformation; the sequence is EVRKISKREQELEDRVKQLEGMLNMDQAYVDSNLIVDLVREAVQREMKVLRTELANL. Tyrosine 662 carries the O-(5'-phospho-RNA)-tyrosine modification. Positions 687-699 are enriched in acidic residues; the sequence is YDDEDEQSEEEAG. 2 disordered regions span residues 687–708 and 822–842; these read YDDEDEQSEEEAGYPDWSDPGD and RKRVQQPKKLQRGPEDPGPEE. Basic residues predominate over residues 822–832; that stretch reads RKRVQQPKKLQ. Over residues 833-842 the composition is skewed to basic and acidic residues; it reads RGPEDPGPEE. Residues 1085–1217 enclose the RdRp catalytic domain; that stretch reads PYWIEFDWTR…TSPSVPNDYV (133 aa).

The protein belongs to the astroviridae polyprotein 1AB family. Monomer. In terms of processing, cleaved by the viral and host proteases. The protease is probably autocatalytically cleaved.

It is found in the host membrane. It catalyses the reaction RNA(n) + a ribonucleoside 5'-triphosphate = RNA(n+1) + diphosphate. In terms of biological role, responsible for the cleavage of the polyprotein into functional products. Protein covalently attached to the 5' extremity of the genomic and subgenomic RNAs. It may serve as a primer for the replicase. The protein is Non-structural polyprotein 1AB (ORF1) of Ovis aries (Sheep).